Consider the following 220-residue polypeptide: Metalloproteinase inhibitor 2 (220 aa).

A signal peptide spans 1-26 (MGAAARTLRLALGLLLLATLLRPADA). Residue Cys27 coordinates Zn(2+). 2 involved in metalloproteinase-binding regions span residues 27 to 30 (CSCS) and 95 to 96 (SA). 6 disulfide bridges follow: Cys27/Cys98, Cys29/Cys127, Cys39/Cys152, Cys154/Cys201, Cys159/Cys164, and Cys172/Cys193. Residues 27–152 (CSCSPVHPQQ…SLNHRYQMGC (126 aa)) form the NTR domain.

It belongs to the protease inhibitor I35 (TIMP) family. In terms of assembly, interacts (via the C-terminal) with MMP2 (via the C-terminal PEX domain); the interaction inhibits the MMP2 activity. In terms of processing, the activity of TIMP2 is dependent on the presence of disulfide bonds.

It is found in the secreted. Its function is as follows. Complexes with metalloproteinases (such as collagenases) and irreversibly inactivates them by binding to their catalytic zinc cofactor. Known to act on MMP-1, MMP-2, MMP-3, MMP-7, MMP-8, MMP-9, MMP-10, MMP-13, MMP-14, MMP-15, MMP-16 and MMP-19. The protein is Metalloproteinase inhibitor 2 (TIMP2) of Homo sapiens (Human).